Reading from the N-terminus, the 340-residue chain is Uroporphyrinogen decarboxylase (340 aa).

Residues 21–25 (RQAGR), Phe40, Asp71, Tyr148, Ser203, and His316 contribute to the substrate site.

This sequence belongs to the uroporphyrinogen decarboxylase family. Homodimer.

The protein resides in the cytoplasm. It carries out the reaction uroporphyrinogen III + 4 H(+) = coproporphyrinogen III + 4 CO2. The protein operates within porphyrin-containing compound metabolism; protoporphyrin-IX biosynthesis; coproporphyrinogen-III from 5-aminolevulinate: step 4/4. Catalyzes the decarboxylation of four acetate groups of uroporphyrinogen-III to yield coproporphyrinogen-III. This Campylobacter jejuni subsp. jejuni serotype O:2 (strain ATCC 700819 / NCTC 11168) protein is Uroporphyrinogen decarboxylase.